The primary structure comprises 65 residues: Metallothionein-like protein type 3 (65 aa).

It belongs to the metallothionein superfamily. Type 15 family.

In terms of biological role, metallothioneins have a high content of cysteine residues that bind various heavy metals. The polypeptide is Metallothionein-like protein type 3 (Carica papaya (Papaya)).